Here is a 270-residue protein sequence, read N- to C-terminus: Phosphonates import ATP-binding protein PhnC 1 (270 aa).

The 244-residue stretch at 2–245 (LVVEGLTCRF…IARELYDLEA (244 aa)) folds into the ABC transporter domain. 34–41 (GRSGAGKS) provides a ligand contact to ATP.

This sequence belongs to the ABC transporter superfamily. Phosphonates importer (TC 3.A.1.9.1) family. The complex is composed of two ATP-binding proteins (PhnC), two transmembrane proteins (PhnE) and a solute-binding protein (PhnD).

Its subcellular location is the cell inner membrane. It carries out the reaction phosphonate(out) + ATP + H2O = phosphonate(in) + ADP + phosphate + H(+). Part of the ABC transporter complex PhnCDE involved in phosphonates import. Responsible for energy coupling to the transport system. This Rhodopseudomonas palustris (strain ATCC BAA-98 / CGA009) protein is Phosphonates import ATP-binding protein PhnC 1.